Consider the following 291-residue polypeptide: Diaminopimelate epimerase (291 aa).

Positions 17, 50, and 70 each coordinate substrate. The active-site Proton donor is Cys-79. Substrate-binding positions include 80 to 81 (GN), Asn-167, Asn-200, and 218 to 219 (ER). Catalysis depends on Cys-227, which acts as the Proton acceptor. Position 228–229 (228–229 (GS)) interacts with substrate.

The protein belongs to the diaminopimelate epimerase family. As to quaternary structure, homodimer.

It is found in the cytoplasm. The enzyme catalyses (2S,6S)-2,6-diaminopimelate = meso-2,6-diaminopimelate. The protein operates within amino-acid biosynthesis; L-lysine biosynthesis via DAP pathway; DL-2,6-diaminopimelate from LL-2,6-diaminopimelate: step 1/1. Its function is as follows. Catalyzes the stereoinversion of LL-2,6-diaminopimelate (L,L-DAP) to meso-diaminopimelate (meso-DAP), a precursor of L-lysine and an essential component of the bacterial peptidoglycan. This Bradyrhizobium diazoefficiens (strain JCM 10833 / BCRC 13528 / IAM 13628 / NBRC 14792 / USDA 110) protein is Diaminopimelate epimerase.